A 380-amino-acid polypeptide reads, in one-letter code: Capsular polysaccharide biosynthesis glycosyltransferase CapM (380 aa).

Belongs to the glycosyltransferase group 1 family. Glycosyltransferase 4 subfamily.

The protein operates within capsule biogenesis; capsule polysaccharide biosynthesis. In terms of biological role, required for the biosynthesis of type 1 capsular polysaccharide. This is Capsular polysaccharide biosynthesis glycosyltransferase CapM (capM) from Staphylococcus aureus.